The following is a 473-amino-acid chain: Protein TED1 (473 aa).

At 1-8 the chain is on the cytoplasmic side; sequence MLRCAVKK. The chain crosses the membrane as a helical span at residues 9 to 29; it reads FAYFATFLTIVANIYIYTYPS. The Lumenal segment spans residues 30–451; it reads FHPEQCSWNC…FSLCPFAIQH (422 aa). Residues Asn-38, Asn-147, Asn-229, Asn-266, and Asn-307 are each glycosylated (N-linked (GlcNAc...) asparagine). A helical transmembrane segment spans residues 452–472; the sequence is VWWFAKVSLLVTIFTWSSLLF. Position 473 (Val-473) is a topological domain, cytoplasmic.

N-glycosylated.

Its subcellular location is the endoplasmic reticulum membrane. In terms of biological role, acts together with EMP24 and ERV25 in cargo exit from the endoplasmic reticulum. The sequence is that of Protein TED1 (TED1) from Saccharomyces cerevisiae (strain ATCC 204508 / S288c) (Baker's yeast).